Reading from the N-terminus, the 839-residue chain is MDCYTANWNPLGDSAFYRKYELYSMDWDLKEELKDCLVAAAPYGGPIALLRNCWRKEKAASVRPVLEIYSASGLPLASLLWKSGPVVALGWSAEEELLCVQEDGAVLVYGLHGDFRRHFSMGNEVLQNRVLDARIFHTEFGSGVAILTGAYRFTLSANVGDLKLRRMPEVPGLQSAPSCWTTLCHDRVPHILLAVGPDLYLLDHATCSAVTPAGLAPGVSSFLQMAVSFTYRYLALFTDTGYIWMGTASLKEKLCEFNCNIRAPPKQMVWCSRPRSKERAVVVAWERRLMVVGNAPESIQFVLDEDSYLVPELDGVRIFSRSTHEFLHEVPVASEEIFKIASMAPGALLLEAQKEYEKESQKADEYLREIQELGQLIQAVQQCIEAAGHEHQPDMQKSLLRAASFGKCFLDRFPPDSFVHMCQDLRVLNAIRDYHIGIPLTYTQYKQLTIQVLLDRLVLRRLYPLAIQICEYLRLPEVQGVSRILAHWACYKARAWDMRDEDVARAINQKLGDTPGVSYSDIAARAYGCGRTELAIKLLEYEPRSGEQVPLLLKMKRSKLALSKAIESGDTDLVFTVLLHLKNELNRGDFFMTLRNQPMALSLYRQFCKHQELDTLKDLYNQDDNHQELGSFHIRASYAAEERIEGRVAALQTAADAFYKAKNEFAAKATEDQMRLLRIQRRLEDELGGRFLDLSLHDTVTTLILGGHNKRAEQLARDFRIPDKRLWWLKLAALADLEDWEELEKFSKSKKSPIGYLPFVEICMKQHNKHEAKKYASRVGPEQKVKALLLVGDVAQAAEVAIEHRNETELSLVLSHCTGATDGAIADKIQRARAQAQKK.

At Y4 the chain carries 3'-nitrotyrosine. Positions 642–736 (ERIEGRVAAL…WWLKLAALAD (95 aa)) are interaction with VPS33A.

It belongs to the VPS16 family. Core component of at least two putative endosomal tethering complexes, the homotypic fusion and vacuole protein sorting (HOPS) complex and the class C core vacuole/endosome tethering (CORVET) complex. Their common core is composed of the class C Vps proteins VPS11, VPS16, VPS18 and VPS33A, which in HOPS further associates with VPS39 and VPS41 and in CORVET with VPS8 and TGFBRAP1. Interacts with RAB5C. Interacts with STX17, MON1B. Associates with adapter protein complex 3 (AP-3) and clathrin:AP-3 complexes.

Its subcellular location is the late endosome membrane. It localises to the lysosome membrane. The protein localises to the early endosome. The protein resides in the cytoplasmic vesicle. It is found in the clathrin-coated vesicle. Its subcellular location is the autophagosome. Its function is as follows. Plays a role in vesicle-mediated protein trafficking to lysosomal compartments including the endocytic membrane transport and autophagic pathways. Believed to act as a core component of the putative HOPS and CORVET endosomal tethering complexes which are proposed to be involved in the Rab5-to-Rab7 endosome conversion probably implicating MON1A/B, and via binding SNAREs and SNARE complexes to mediate tethering and docking events during SNARE-mediated membrane fusion. The HOPS complex is proposed to be recruited to Rab7 on the late endosomal membrane and to regulate late endocytic, phagocytic and autophagic traffic towards lysosomes. The CORVET complex is proposed to function as a Rab5 effector to mediate early endosome fusion probably in specific endosome subpopulations. Required for recruitment of VPS33A to the HOPS complex. Required for fusion of endosomes and autophagosomes with lysosomes; the function is dependent on its association with VPS33A but not VPS33B. The function in autophagosome-lysosome fusion implicates STX17 but not UVRAG. This is Vacuolar protein sorting-associated protein 16 homolog (Vps16) from Mus musculus (Mouse).